The sequence spans 244 residues: Venom nerve growth factor 1 (244 aa).

Positions Met1–Ala18 are cleaved as a signal peptide. A propeptide spanning residues Ala19–Arg125 is cleaved from the precursor. Basic and acidic residues predominate over residues Gly47–Asp66. Residues Gly47 to Gln67 form a disordered region. 3 disulfides stabilise this stretch: Cys139-Cys205, Cys181-Cys233, and Cys193-Cys235.

Belongs to the NGF-beta family. As to quaternary structure, homodimer; non-covalently linked. Expressed by the venom gland.

The protein resides in the secreted. In terms of biological role, nerve growth factor is important for the development and maintenance of the sympathetic and sensory nervous systems. It stimulates division and differentiation of sympathetic and embryonic sensory neurons as well as basal forebrain cholinergic neurons in the brain. Its relevance in the snake venom is not clear. However, it has been shown to inhibit metalloproteinase-dependent proteolysis of platelet glycoprotein Ib alpha, suggesting a metalloproteinase inhibition to prevent metalloprotease autodigestion and/or protection against prey proteases. Binds a lipid between the two protein chains in the homodimer. The lipid-bound form promotes histamine relase from mouse mast cells, contrary to the lipid-free form. In Notechis scutatus scutatus (Mainland tiger snake), this protein is Venom nerve growth factor 1.